A 393-amino-acid polypeptide reads, in one-letter code: Endoglucanase 1 (393 aa).

The N-terminal stretch at 1–26 is a signal peptide; the sequence is MAFKLNIGLLALSLSLSLVHLDGVRA. Asp-34 functions as the Nucleophile in the catalytic mechanism. Asp-152 (proton donor) is an active-site residue. The segment at 233-393 is disordered; the sequence is GCQRKDDNTI…GGHKKCHKKH (161 aa). 2 stretches are compositionally biased toward low complexity: residues 319-329 and 337-370; these read QGSSNGDATTG and DSGS…NPGA. N-linked (GlcNAc...) asparagine glycosylation occurs at Asn-343. The span at 371–384 shows a compositional bias: gly residues; sequence AQGGQGGAQPGPSG.

Belongs to the glycosyl hydrolase 45 (cellulase K) family. May also be O-glycosylated. Hyphal tip.

It localises to the secreted. The enzyme catalyses Endohydrolysis of (1-&gt;4)-beta-D-glucosidic linkages in cellulose, lichenin and cereal beta-D-glucans.. In Mycosarcoma maydis (Corn smut fungus), this protein is Endoglucanase 1 (EGL1).